We begin with the raw amino-acid sequence, 89 residues long: uncharacterized protein (89 aa).

This is an uncharacterized protein from Mycobacterium bovis (strain ATCC BAA-935 / AF2122/97).